The primary structure comprises 491 residues: Keratin, type II microfibrillar, component 7C (491 aa).

Blocked amino end (Cys) is present on cysteine 1. The tract at residues 1–109 is head; sequence CGFSTVGSGF…PNAQCVKQEE (109 aa). Residues 109-420 form the IF rod domain; it reads EKEQIKCLNN…RLLEGEEQRL (312 aa). The coil 1A stretch occupies residues 110–144; it reads KEQIKCLNNRFAAFIDKVRFLEQQNKLLETKLQFF. The tract at residues 145–154 is linker 1; it reads QNRQCCESNL. Positions 155-255 are coil 1B; sequence EPLFEGYIET…YQEEIRVLQA (101 aa). Positions 256–272 are linker 12; that stretch reads NISDTSVIVKMDNSRDL. A coil 2 region spans residues 273–416; it reads NMDCIVAEIK…ATYRRLLEGE (144 aa). The tail stretch occupies residues 417–491; sequence EQRLCEGVGA…GGGSCSLGRC (75 aa).

Belongs to the intermediate filament family.

Functionally, wool microfibrillar keratin. The sequence is that of Keratin, type II microfibrillar, component 7C from Ovis aries (Sheep).